Reading from the N-terminus, the 122-residue chain is Large ribosomal subunit protein uL18 (122 aa).

Positions 1 to 11 (MLKKPDRNALR) are enriched in basic and acidic residues. The segment at 1–22 (MLKKPDRNALRDKRRRRVRKKI) is disordered. The segment covering 12–22 (DKRRRRVRKKI) has biased composition (basic residues).

The protein belongs to the universal ribosomal protein uL18 family. Part of the 50S ribosomal subunit; part of the 5S rRNA/L5/L18/L25 subcomplex. Contacts the 5S and 23S rRNAs.

Functionally, this is one of the proteins that bind and probably mediate the attachment of the 5S RNA into the large ribosomal subunit, where it forms part of the central protuberance. This chain is Large ribosomal subunit protein uL18, found in Pelotomaculum thermopropionicum (strain DSM 13744 / JCM 10971 / SI).